Reading from the N-terminus, the 88-residue chain is Cold-regulated protein BLT14 (88 aa).

The chain is Cold-regulated protein BLT14 (BLT14) from Hordeum vulgare (Barley).